Reading from the N-terminus, the 244-residue chain is Phosphoadenosine 5'-phosphosulfate reductase (244 aa).

Residue Cys239 is the Nucleophile; cysteine thiosulfonate intermediate of the active site.

It belongs to the PAPS reductase family. CysH subfamily.

Its subcellular location is the cytoplasm. It carries out the reaction [thioredoxin]-disulfide + sulfite + adenosine 3',5'-bisphosphate + 2 H(+) = [thioredoxin]-dithiol + 3'-phosphoadenylyl sulfate. The protein operates within sulfur metabolism; hydrogen sulfide biosynthesis; sulfite from sulfate: step 3/3. Functionally, catalyzes the formation of sulfite from phosphoadenosine 5'-phosphosulfate (PAPS) using thioredoxin as an electron donor. This is Phosphoadenosine 5'-phosphosulfate reductase from Cronobacter sakazakii (strain ATCC BAA-894) (Enterobacter sakazakii).